Reading from the N-terminus, the 258-residue chain is UPF0246 protein YaaA (258 aa).

This sequence belongs to the UPF0246 family.

The chain is UPF0246 protein YaaA from Escherichia coli (strain K12 / MC4100 / BW2952).